Consider the following 566-residue polypeptide: NAD-dependent malic enzyme (566 aa).

Residue tyrosine 104 is the Proton donor of the active site. Arginine 157 is an NAD(+) binding site. The Proton acceptor role is filled by lysine 175. Residues glutamate 246, aspartate 247, and aspartate 270 each contribute to the a divalent metal cation site. Residues aspartate 270 and asparagine 419 each contribute to the NAD(+) site.

It belongs to the malic enzymes family. As to quaternary structure, homotetramer. The cofactor is Mg(2+). It depends on Mn(2+) as a cofactor.

It carries out the reaction (S)-malate + NAD(+) = pyruvate + CO2 + NADH. The catalysed reaction is oxaloacetate + H(+) = pyruvate + CO2. The polypeptide is NAD-dependent malic enzyme (Cronobacter sakazakii (strain ATCC BAA-894) (Enterobacter sakazakii)).